A 527-amino-acid chain; its full sequence is Peptide chain release factor 3 (527 aa).

Positions 9-277 constitute a tr-type G domain; the sequence is AKRRTFAIIS…AVVDWAPRPL (269 aa). Residues 18–25, 86–90, and 140–143 each bind GTP; these read SHPDAGKT, DTPGH, and NKLD.

Belongs to the TRAFAC class translation factor GTPase superfamily. Classic translation factor GTPase family. PrfC subfamily.

It is found in the cytoplasm. Increases the formation of ribosomal termination complexes and stimulates activities of RF-1 and RF-2. It binds guanine nucleotides and has strong preference for UGA stop codons. It may interact directly with the ribosome. The stimulation of RF-1 and RF-2 is significantly reduced by GTP and GDP, but not by GMP. The protein is Peptide chain release factor 3 of Pseudomonas entomophila (strain L48).